A 130-amino-acid polypeptide reads, in one-letter code: Small ribosomal subunit protein uS9 (130 aa).

Belongs to the universal ribosomal protein uS9 family.

This is Small ribosomal subunit protein uS9 from Cupriavidus metallidurans (strain ATCC 43123 / DSM 2839 / NBRC 102507 / CH34) (Ralstonia metallidurans).